Consider the following 172-residue polypeptide: Protein GrpE (172 aa).

The disordered stretch occupies residues 1–23 (MNQDHPEFDSEDLSQNPPETDPL).

It belongs to the GrpE family. Homodimer.

It is found in the cytoplasm. Participates actively in the response to hyperosmotic and heat shock by preventing the aggregation of stress-denatured proteins, in association with DnaK and GrpE. It is the nucleotide exchange factor for DnaK and may function as a thermosensor. Unfolded proteins bind initially to DnaJ; upon interaction with the DnaJ-bound protein, DnaK hydrolyzes its bound ATP, resulting in the formation of a stable complex. GrpE releases ADP from DnaK; ATP binding to DnaK triggers the release of the substrate protein, thus completing the reaction cycle. Several rounds of ATP-dependent interactions between DnaJ, DnaK and GrpE are required for fully efficient folding. The sequence is that of Protein GrpE from Xanthomonas axonopodis pv. citri (strain 306).